Reading from the N-terminus, the 288-residue chain is Small ribosomal subunit protein uS15m (288 aa).

The transit peptide at 1 to 50 directs the protein to the mitochondrion; it reads MRLFEGAFQPWKLASTNLMQQCLLLNKKSQFHTTCILQGLKKQKANQRRK.

This sequence belongs to the universal ribosomal protein uS15 family. As to quaternary structure, component of the mitochondrial small ribosomal subunit (mt-SSU). Mature yeast 74S mitochondrial ribosomes consist of a small (37S) and a large (54S) subunit. The 37S small subunit contains a 15S ribosomal RNA (15S mt-rRNA) and at least 32 different proteins. The 54S large subunit contains a 21S rRNA (21S mt-rRNA) and at least 45 different proteins.

Its subcellular location is the mitochondrion. Component of the mitochondrial ribosome (mitoribosome), a dedicated translation machinery responsible for the synthesis of mitochondrial genome-encoded proteins, including at least some of the essential transmembrane subunits of the mitochondrial respiratory chain. The mitoribosomes are attached to the mitochondrial inner membrane and translation products are cotranslationally integrated into the membrane. This Schizosaccharomyces pombe (strain 972 / ATCC 24843) (Fission yeast) protein is Small ribosomal subunit protein uS15m (mrps28).